The following is a 254-amino-acid chain: Guanylate kinase (254 aa).

Residues 64–243 enclose the Guanylate kinase-like domain; that stretch reads KHLVVLAGPT…AAREVVDLMM (180 aa). 71–78 contributes to the ATP binding site; sequence GPTAVGKG.

Belongs to the guanylate kinase family.

The protein localises to the cytoplasm. The enzyme catalyses GMP + ATP = GDP + ADP. In terms of biological role, essential for recycling GMP and indirectly, cGMP. In Leifsonia xyli subsp. xyli (strain CTCB07), this protein is Guanylate kinase.